Consider the following 367-residue polypeptide: Epoxide hydrolase 3 (367 aa).

Residues 21-41 (GVFFWVLVYVAALLAAVSYIP) traverse the membrane as a helical segment. Asp-173 functions as the Nucleophile in the catalytic mechanism. Tyr-285 (proton donor) is an active-site residue. His-340 serves as the catalytic Proton acceptor.

It belongs to the AB hydrolase superfamily. Epoxide hydrolase family.

Its subcellular location is the microsome membrane. It carries out the reaction an epoxide + H2O = an ethanediol. It catalyses the reaction 9,10-epoxyoctadecanoate + H2O = 9,10-dihydroxyoctadecanoate. The enzyme catalyses 9,10-epoxy-(12Z)-octadecenoate + H2O = 9,10-dihydroxy-(12Z)-octadecenoate. The catalysed reaction is 8,9-epoxy-(5Z,11Z,14Z)-eicosatrienoate + H2O = 8,9-dihydroxy-(5Z,11Z,14Z)-eicosatrienoate. It carries out the reaction 11,12-epoxy-(5Z,8Z,14Z)-eicosatrienoate + H2O = 11,12-dihydroxy-(5Z,8Z,14Z)-eicosatrienoate. It catalyses the reaction 14,15-epoxy-(5Z,8Z,11Z)-eicosatrienoate + H2O = 14,15-dihydroxy-(5Z,8Z,11Z)-eicosatrienoate. Inhibited by 1-(1-acetylpiperidin-4-yl)-3-(4-(trifl uoromethoxy)phenyl)urea (TPAU), 1-cyclohexyl-3-dodecylurea (CDU), 12-(3-adamantan-1-yl-ureido)-dodecanoic acid (AUDA), 1-((3S, 5S, 7S)-adamantan-1-yl)-3-(5-(2-(2-ethoxyethoxy) ethoxy)pentyl)urea (AEPU) and to a lesser extent by 8-(3-((3S, 5S, 7S)-adamantan-1-yl)ureido) octanoic acid (AUOA). Functionally, catalyzes the hydrolysis of epoxide-containing fatty acids. Active in vitro against epoxyeicosatrienoic acids (EETs) including 8,9-EET, 9,10-EET, 11,12-EET and 14,15-EET and leukotoxin. The protein is Epoxide hydrolase 3 (ephx3) of Xenopus tropicalis (Western clawed frog).